The primary structure comprises 334 residues: Antho-RFamide neuropeptides (334 aa).

Positions 1–26 (MLVAMTTASYVTILVTLLFHILTINA) are cleaved as a signal peptide. The propeptide occupies 27–116 (KTVTKRAKET…REFQGRFGRE (90 aa)). 2 stretches are compositionally biased toward basic and acidic residues: residues 115–289 (REQG…RELL) and 303–334 (PQTR…ANKS). Residues 115-334 (REQGRFGREE…ESNDEEANKS (220 aa)) form a disordered region. Position 120 is a phenylalanine amide (Phe-120). Positions 122 to 125 (REED) are excised as a propeptide. A Phenylalanine amide modification is found at Phe-129. Residues 131–134 (REED) constitute a propeptide that is removed on maturation. Phe-138 carries the post-translational modification Phenylalanine amide. The propeptide occupies 140–142 (REE). Position 146 is a phenylalanine amide (Phe-146). A propeptide spanning residues 148-151 (REED) is cleaved from the precursor. Phenylalanine amide is present on Phe-155. The propeptide occupies 157–160 (REED). Phe-164 is subject to Phenylalanine amide. A propeptide spanning residues 166–169 (REED) is cleaved from the precursor. Phenylalanine amide is present on Phe-173. Residues 175-178 (REEE) constitute a propeptide that is removed on maturation. A Phenylalanine amide modification is found at Phe-182. The propeptide occupies 184–187 (REED). The residue at position 191 (Phe-191) is a Phenylalanine amide. A propeptide spanning residues 193–196 (REEE) is cleaved from the precursor. Phenylalanine amide is present on Phe-200. The propeptide occupies 202 to 205 (REED). Phe-209 bears the Phenylalanine amide mark. Residues 211–214 (REED) constitute a propeptide that is removed on maturation. Phe-218 carries the phenylalanine amide modification. Positions 220–223 (REEE) are excised as a propeptide. Position 227 is a phenylalanine amide (Phe-227). Positions 229–233 (KRDED) are excised as a propeptide. Phe-237 carries the post-translational modification Phenylalanine amide. Residues 239–242 (KRED) constitute a propeptide that is removed on maturation. Phe-246 carries the post-translational modification Phenylalanine amide. A propeptide spanning residues 248-252 (KRDED) is cleaved from the precursor. At Phe-256 the chain carries Phenylalanine amide. The propeptide occupies 258-262 (KRDED). The residue at position 266 (Phe-266) is a Phenylalanine amide. Positions 268–271 (KRED) are excised as a propeptide. A Phenylalanine amide modification is found at Phe-275. The propeptide occupies 277-280 (KRED). A Phenylalanine amide modification is found at Phe-284. The propeptide occupies 286–334 (RELLAKLNKRTTSIQEDPQTRFRDVQMTRRNVAKKDKIEESNDEEANKS).

The protein belongs to the FARP (FMRFamide related peptide) family. In terms of tissue distribution, neurons associated with smooth muscle fibers.

It is found in the secreted. Functionally, not known but it could act as a transmitter at neuromuscular synapses. This Calliactis parasitica (Sea anemone) protein is Antho-RFamide neuropeptides.